Here is a 488-residue protein sequence, read N- to C-terminus: Glutamate--tRNA ligase (488 aa).

Positions 9–19 match the 'HIGH' region motif; that stretch reads PSPTGFLHIGG. Zn(2+) contacts are provided by cysteine 112, cysteine 114, cysteine 139, and histidine 141. Residues 256 to 260 carry the 'KMSKS' region motif; sequence KLSKR. Lysine 259 is an ATP binding site.

This sequence belongs to the class-I aminoacyl-tRNA synthetase family. Glutamate--tRNA ligase type 1 subfamily. In terms of assembly, monomer. The cofactor is Zn(2+).

It is found in the cytoplasm. The catalysed reaction is tRNA(Glu) + L-glutamate + ATP = L-glutamyl-tRNA(Glu) + AMP + diphosphate. Its function is as follows. Catalyzes the attachment of glutamate to tRNA(Glu) in a two-step reaction: glutamate is first activated by ATP to form Glu-AMP and then transferred to the acceptor end of tRNA(Glu). In Elusimicrobium minutum (strain Pei191), this protein is Glutamate--tRNA ligase.